Consider the following 241-residue polypeptide: Probable transcriptional regulatory protein Maqu_2154 (241 aa).

It belongs to the TACO1 family.

The protein localises to the cytoplasm. The sequence is that of Probable transcriptional regulatory protein Maqu_2154 from Marinobacter nauticus (strain ATCC 700491 / DSM 11845 / VT8) (Marinobacter aquaeolei).